The chain runs to 287 residues: GPN-loop GTPase 3 (287 aa).

12–17 (GAGKST) provides a ligand contact to GTP. The Gly-Pro-Asn (GPN)-loop; involved in dimer interface motif lies at 69-71 (GPN). 172–175 (SKMD) is a GTP binding site.

It belongs to the GPN-loop GTPase family. As to quaternary structure, heterodimers with GPN1 or GPN2. Binds to RNA polymerase II (RNAPII).

In terms of biological role, small GTPase required for proper nuclear import of RNA polymerase II and III (RNAPII and RNAPIII). May act at an RNAP assembly step prior to nuclear import. The protein is GPN-loop GTPase 3 of Cryptococcus neoformans var. neoformans serotype D (strain B-3501A) (Filobasidiella neoformans).